A 473-amino-acid polypeptide reads, in one-letter code: MPRSLLGRMLLLTLLAVLVAQGLSSLFWLSHLRSSQREGLLTSSRSLAYSMAASVSYFRSLPLGYRPLVLDQLRSMGGTRFFVSLNDRPLEMRALPDTPNKQAVLEIVQDVLHQRLGKEVELQVEFVSPDELRLFNGALKLDELPRSWAHYALTLEPVNPPVLVTQIRIGESEWLYIASLMPAPYVSLEPEGLQPQQVLSIVFTSLLLLLFTGLLMHWQSRPLKRLARAARDLALGSPSAALEERGASELVEVARAFNTMHERIDRYLNERGQLFSAISHDLRTPITRLRLRVELLEDERLQEKFGRDLDELELLVKGALQCVKDTDIHENVESVDLNLLLQHIAEPYLADGRVEVVGRAAEPYPGKPLALKRCIGNLLDNALKYGERARLSLEDGPEAVVLHVDDDGPGVPEQRLEQIFEPRFRLSPRGQGYGLGLGIARNIAHTHGGEVSLQNRREGGLRVSLRLPRLGLE.

The Cytoplasmic portion of the chain corresponds to Met1–Arg8. Residues Met9–Leu29 traverse the membrane as a helical segment. Topologically, residues Ser30–Gln197 are periplasmic. Residues Val198–Trp218 form a helical membrane-spanning segment. Residues His217 to Asn269 form the HAMP domain. Residues Gln219–Glu473 are Cytoplasmic-facing. Residues Ala277–Gly471 enclose the Histidine kinase domain. A Phosphohistidine; by autocatalysis modification is found at His280.

In terms of processing, autophosphorylated.

The protein resides in the cell inner membrane. The enzyme catalyses ATP + protein L-histidine = ADP + protein N-phospho-L-histidine.. Functionally, member of the two-component regulatory system GtrS/GltR involved in the regulation of glucose metabolism and transport, as well as regulation of the exotoxin A gene expression. GtrS recognizes and binds 2-ketogluconate and 6-phosphogluconate via its sensor domain, which accelerates GtrS autophosphorylation and concomitant transphosphorylation and regulation of the response regulator GltR. In terms of biological role, plays a key role during bacteria-host interactions and is required for optimal colonization and dissemination in a mouse model of infection. Contributes to modulation of the type III secretion system (T3SS) in response to host cells via the regulation of the OprB transport system. This chain is Sensor histidine kinase GtrS, found in Pseudomonas aeruginosa (strain ATCC 15692 / DSM 22644 / CIP 104116 / JCM 14847 / LMG 12228 / 1C / PRS 101 / PAO1).